Here is a 604-residue protein sequence, read N- to C-terminus: Elongation factor 4 (604 aa).

Residues 7–189 (SRLRNFCIIA…AVVDRIPPPA (183 aa)) form the tr-type G domain. Residues 19–24 (DHGKST) and 136–139 (NKID) each bind GTP.

It belongs to the TRAFAC class translation factor GTPase superfamily. Classic translation factor GTPase family. LepA subfamily.

It localises to the cell inner membrane. The catalysed reaction is GTP + H2O = GDP + phosphate + H(+). Required for accurate and efficient protein synthesis under certain stress conditions. May act as a fidelity factor of the translation reaction, by catalyzing a one-codon backward translocation of tRNAs on improperly translocated ribosomes. Back-translocation proceeds from a post-translocation (POST) complex to a pre-translocation (PRE) complex, thus giving elongation factor G a second chance to translocate the tRNAs correctly. Binds to ribosomes in a GTP-dependent manner. This is Elongation factor 4 from Prochlorococcus marinus (strain MIT 9303).